An 80-amino-acid chain; its full sequence is Penaeidin-3 (80 aa).

A signal peptide spans 1 to 19 (MRLVVCLVYLVSFALVCQG). Residue Q20 is modified to Pyrrolidone carboxylic acid. 3 disulfide bridges follow: C54-C67, C57-C74, and C68-C75.

Belongs to the penaeidin family. In terms of processing, the N-terminus forms pyrrolidone carboxylic acid. As to expression, strongly expressed in hemocytes, and to a lesser extent in heart, muscle, gills, intestine and eyestalk. Lowest expression in hepatopancreas.

It is found in the cytoplasmic granule. Antibacterial and antifungal activity. Presents chitin-binding activity. The sequence is that of Penaeidin-3 from Penaeus indicus (Indian white prawn).